Reading from the N-terminus, the 383-residue chain is Serine protease 23 (383 aa).

The signal sequence occupies residues 1 to 19 (MAGIPGLLFLLFLLLCAVG). Asn93 carries N-linked (GlcNAc...) asparagine glycosylation. The interval 108-127 (SSGGGAQHRDSGSSGKSRRK) is disordered. Ser109 bears the Phosphoserine; by FAM20C mark. The cysteines at positions 160 and 176 are disulfide-linked. Catalysis depends on His175, which acts as the Charge relay system. A glycan (N-linked (GlcNAc...) asparagine) is linked at Asn207. Catalysis depends on charge relay system residues Asp240 and Ser316.

Belongs to the peptidase S1 family.

It localises to the secreted. This is Serine protease 23 (PRSS23) from Macaca mulatta (Rhesus macaque).